The chain runs to 344 residues: Tetraacyldisaccharide 4'-kinase (344 aa).

An ATP-binding site is contributed by 65 to 72 (HAGGTGKT).

Belongs to the LpxK family.

The catalysed reaction is a lipid A disaccharide + ATP = a lipid IVA + ADP + H(+). It participates in glycolipid biosynthesis; lipid IV(A) biosynthesis; lipid IV(A) from (3R)-3-hydroxytetradecanoyl-[acyl-carrier-protein] and UDP-N-acetyl-alpha-D-glucosamine: step 6/6. Its function is as follows. Transfers the gamma-phosphate of ATP to the 4'-position of a tetraacyldisaccharide 1-phosphate intermediate (termed DS-1-P) to form tetraacyldisaccharide 1,4'-bis-phosphate (lipid IVA). This Neisseria meningitidis serogroup C / serotype 2a (strain ATCC 700532 / DSM 15464 / FAM18) protein is Tetraacyldisaccharide 4'-kinase.